Reading from the N-terminus, the 198-residue chain is MVNGPAELRRKLVIVGDGACGKTCLLIVFSKGTFPEVYVPTVFENYVADVEVDGRKVELALWDTAGQEDYDRLRPLSYPDSNVILICFSVDSPDSLDNVLEKWISEVLHFCQGVPIILVGCKSDLRDDPHTIEALRQQQQQPVSTSEGQQVAQRIGAADYLECSAKTGRGVREVFEAATRASLRVKEKKEKKKKCVVL.

16-23 is a binding site for GTP; it reads GDGACGKT. Residues 38 to 46 carry the Effector region motif; the sequence is YVPTVFENY. GTP is bound by residues 63-67 and 121-124; these read DTAGQ and CKSD. Cys195 carries the cysteine methyl ester modification. Residue Cys195 is the site of S-geranylgeranyl cysteine attachment. Positions 196–198 are cleaved as a propeptide — removed in mature form; that stretch reads VVL.

The protein belongs to the small GTPase superfamily. Rho family.

The protein localises to the cell membrane. This Candida albicans (strain SC5314 / ATCC MYA-2876) (Yeast) protein is GTP-binding protein RHO1 (RHO1).